Consider the following 118-residue polypeptide: Large ribosomal subunit protein bL20 (118 aa).

It belongs to the bacterial ribosomal protein bL20 family.

Functionally, binds directly to 23S ribosomal RNA and is necessary for the in vitro assembly process of the 50S ribosomal subunit. It is not involved in the protein synthesizing functions of that subunit. The sequence is that of Large ribosomal subunit protein bL20 from Francisella tularensis subsp. holarctica (strain FTNF002-00 / FTA).